A 372-amino-acid polypeptide reads, in one-letter code: Chaperone protein DnaJ (372 aa).

The J domain maps to 3–68 (NLYEILEVNE…EKRKKYDMYG (66 aa)). The CR-type zinc-finger motif lies at 130–212 (GTKKEISYKK…CKGKGYEIER (83 aa)). Residues Cys-143, Cys-146, Cys-160, Cys-163, Cys-186, Cys-189, Cys-200, and Cys-203 each coordinate Zn(2+). CXXCXGXG motif repeat units follow at residues 143 to 150 (CHVCNGDG), 160 to 167 (CEKCHGTG), 186 to 193 (CDKCHGEG), and 200 to 207 (CENCKGKG).

It belongs to the DnaJ family. Homodimer. Zn(2+) serves as cofactor.

The protein localises to the cytoplasm. Its function is as follows. Participates actively in the response to hyperosmotic and heat shock by preventing the aggregation of stress-denatured proteins and by disaggregating proteins, also in an autonomous, DnaK-independent fashion. Unfolded proteins bind initially to DnaJ; upon interaction with the DnaJ-bound protein, DnaK hydrolyzes its bound ATP, resulting in the formation of a stable complex. GrpE releases ADP from DnaK; ATP binding to DnaK triggers the release of the substrate protein, thus completing the reaction cycle. Several rounds of ATP-dependent interactions between DnaJ, DnaK and GrpE are required for fully efficient folding. Also involved, together with DnaK and GrpE, in the DNA replication of plasmids through activation of initiation proteins. This Finegoldia magna (strain ATCC 29328 / DSM 20472 / WAL 2508) (Peptostreptococcus magnus) protein is Chaperone protein DnaJ.